A 328-amino-acid chain; its full sequence is Ketol-acid reductoisomerase (NADP(+)) (328 aa).

Residues 1–179 (MRVLYERDGD…GGGAAGIIET (179 aa)) enclose the KARI N-terminal Rossmann domain. Residues 24–27 (YGSQ), R47, and S51 contribute to the NADP(+) site. The active site involves H106. G132 contacts NADP(+). The KARI C-terminal knotted domain occupies 180–325 (TFVDETETDL…ARLRSRMTCA (146 aa)). Residues D188, E192, E224, and E228 each coordinate Mg(2+). S249 contributes to the substrate binding site.

The protein belongs to the ketol-acid reductoisomerase family. Requires Mg(2+) as cofactor.

It catalyses the reaction (2R)-2,3-dihydroxy-3-methylbutanoate + NADP(+) = (2S)-2-acetolactate + NADPH + H(+). The enzyme catalyses (2R,3R)-2,3-dihydroxy-3-methylpentanoate + NADP(+) = (S)-2-ethyl-2-hydroxy-3-oxobutanoate + NADPH + H(+). It participates in amino-acid biosynthesis; L-isoleucine biosynthesis; L-isoleucine from 2-oxobutanoate: step 2/4. The protein operates within amino-acid biosynthesis; L-valine biosynthesis; L-valine from pyruvate: step 2/4. Functionally, involved in the biosynthesis of branched-chain amino acids (BCAA). Catalyzes an alkyl-migration followed by a ketol-acid reduction of (S)-2-acetolactate (S2AL) to yield (R)-2,3-dihydroxy-isovalerate. In the isomerase reaction, S2AL is rearranged via a Mg-dependent methyl migration to produce 3-hydroxy-3-methyl-2-ketobutyrate (HMKB). In the reductase reaction, this 2-ketoacid undergoes a metal-dependent reduction by NADPH to yield (R)-2,3-dihydroxy-isovalerate. In Tremblaya princeps, this protein is Ketol-acid reductoisomerase (NADP(+)).